The following is a 155-amino-acid chain: Ribonuclease H (155 aa).

Positions 4 to 145 constitute an RNase H type-1 domain; sequence DISKVVIYTD…ADKLAVQGRQ (142 aa). Mg(2+) contacts are provided by aspartate 13, glutamate 51, aspartate 73, and aspartate 137.

This sequence belongs to the RNase H family. As to quaternary structure, monomer. Mg(2+) serves as cofactor.

It localises to the cytoplasm. It catalyses the reaction Endonucleolytic cleavage to 5'-phosphomonoester.. Functionally, endonuclease that specifically degrades the RNA of RNA-DNA hybrids. The chain is Ribonuclease H from Rickettsia bellii (strain RML369-C).